The chain runs to 142 residues: RNA-directed DNA polymerase homolog (142 aa).

The protein resides in the mitochondrion. It catalyses the reaction RNA(n) + a ribonucleoside 5'-triphosphate = RNA(n+1) + diphosphate. The protein is RNA-directed DNA polymerase homolog of Oenothera berteroana (Bertero's evening primrose).